The chain runs to 316 residues: Conjugated bile acid hydrolase (316 aa).

Cys-2 serves as the catalytic Nucleophile. 2 residues coordinate deoxycholate: Cys-2 and Arg-18. Asn-81 contributes to the taurine binding site.

The protein belongs to the peptidase C59 family.

The enzyme catalyses cholate + taurine = taurocholate + H2O. It carries out the reaction taurochenodeoxycholate + H2O = chenodeoxycholate + taurine. The catalysed reaction is taurodeoxycholate + H2O = deoxycholate + taurine. It catalyses the reaction glycocholate + H2O = cholate + glycine. The enzyme catalyses glycodeoxycholate + H2O = deoxycholate + glycine. It participates in lipid metabolism; bile acid biosynthesis. Bile salt hydrolase that catalyzes the deconjugation of glycine- and taurine-linked bile salts, which occurs naturally in the intestines of humans, releasing amino acid residues and deconjugated bile salts (bile acids). Can hydrolyze the amide bond in the bile salts taurocholate (TCA), taurodeoxycholate (TDCA), taurochenodeoxycholate (TCDCA), glycocholate (GCA) and glycodeoxycholate (GDCA). Shows highest activity toward the taurine-conjugated bile salts TCA and TCDCA. The activity toward the other three substrates (TDCA, GCA and GDCA) is relatively low. This enzyme likely contributes to bile salt resistance of the strain and may be associated with survival capability of strain JCM1131 within the human intestine by bile detoxification. The chain is Conjugated bile acid hydrolase from Lactobacillus gasseri (strain ATCC 33323 / DSM 20243 / BCRC 14619 / CIP 102991 / JCM 1131 / KCTC 3163 / NCIMB 11718 / NCTC 13722 / AM63).